Consider the following 139-residue polypeptide: S-adenosylmethionine decarboxylase proenzyme (139 aa).

The active-site Schiff-base intermediate with substrate; via pyruvic acid is the serine 63. Serine 63 is subject to Pyruvic acid (Ser); by autocatalysis. Catalysis depends on histidine 68, which acts as the Proton acceptor; for processing activity. Cysteine 83 serves as the catalytic Proton donor; for catalytic activity.

This sequence belongs to the prokaryotic AdoMetDC family. Type 1 subfamily. In terms of assembly, heterotetramer of two alpha and two beta chains arranged as a dimer of alpha/beta heterodimers. Pyruvate is required as a cofactor. Is synthesized initially as an inactive proenzyme. Formation of the active enzyme involves a self-maturation process in which the active site pyruvoyl group is generated from an internal serine residue via an autocatalytic post-translational modification. Two non-identical subunits are generated from the proenzyme in this reaction, and the pyruvate is formed at the N-terminus of the alpha chain, which is derived from the carboxyl end of the proenzyme. The post-translation cleavage follows an unusual pathway, termed non-hydrolytic serinolysis, in which the side chain hydroxyl group of the serine supplies its oxygen atom to form the C-terminus of the beta chain, while the remainder of the serine residue undergoes an oxidative deamination to produce ammonia and the pyruvoyl group blocking the N-terminus of the alpha chain.

It carries out the reaction S-adenosyl-L-methionine + H(+) = S-adenosyl 3-(methylsulfanyl)propylamine + CO2. Its pathway is amine and polyamine biosynthesis; S-adenosylmethioninamine biosynthesis; S-adenosylmethioninamine from S-adenosyl-L-methionine: step 1/1. Its function is as follows. Catalyzes the decarboxylation of S-adenosylmethionine to S-adenosylmethioninamine (dcAdoMet), the propylamine donor required for the synthesis of the polyamines spermine and spermidine from the diamine putrescine. The sequence is that of S-adenosylmethionine decarboxylase proenzyme from Pyrococcus furiosus (strain ATCC 43587 / DSM 3638 / JCM 8422 / Vc1).